We begin with the raw amino-acid sequence, 396 residues long: Flavohemoprotein (396 aa).

The Globin domain maps to 1 to 136; it reads MLDNHTIAIV…LANVFIQRED (136 aa). Residue histidine 85 coordinates heme b. Catalysis depends on charge relay system residues tyrosine 95 and glutamate 135. The tract at residues 147 to 396 is reductase; it reads GGWSGVRPFR…YECFGPHKVV (250 aa). An FAD-binding FR-type domain is found at 150–255; the sequence is SGVRPFRIVN…AAPHGDFFLD (106 aa). FAD contacts are provided by residues tyrosine 188 and 204-207; that span reads RQYS. Residue 268 to 273 participates in NADP(+) binding; the sequence is GVGQTP. 389-392 contacts FAD; that stretch reads CFGP.

It belongs to the globin family. Two-domain flavohemoproteins subfamily. The protein in the C-terminal section; belongs to the flavoprotein pyridine nucleotide cytochrome reductase family. Heme b serves as cofactor. FAD is required as a cofactor.

The catalysed reaction is 2 nitric oxide + NADPH + 2 O2 = 2 nitrate + NADP(+) + H(+). The enzyme catalyses 2 nitric oxide + NADH + 2 O2 = 2 nitrate + NAD(+) + H(+). Is involved in NO detoxification in an aerobic process, termed nitric oxide dioxygenase (NOD) reaction that utilizes O(2) and NAD(P)H to convert NO to nitrate, which protects the bacterium from various noxious nitrogen compounds. Therefore, plays a central role in the inducible response to nitrosative stress. The sequence is that of Flavohemoprotein from Pectobacterium atrosepticum (strain SCRI 1043 / ATCC BAA-672) (Erwinia carotovora subsp. atroseptica).